The sequence spans 62 residues: DNA-binding protein 7 (62 aa).

The protein belongs to the 7 kDa DNA-binding/endoribonuclease P2 family. In terms of assembly, monomer.

Its subcellular location is the cytoplasm. Can constrain negative DNA supercoils. May be involved in maintaining the integrity of the genome at high temperature. In Metallosphaera sedula (strain ATCC 51363 / DSM 5348 / JCM 9185 / NBRC 15509 / TH2), this protein is DNA-binding protein 7.